We begin with the raw amino-acid sequence, 594 residues long: Cryptochrome-2 (594 aa).

Residues 21-150 (ASSVHWFRKG…EVVTENSHTL (130 aa)) form the Photolyase/cryptochrome alpha/beta domain. Residue Lys-29 forms a Glycyl lysine isopeptide (Lys-Gly) (interchain with G-Cter in ubiquitin) linkage. Phosphoserine is present on Ser-89. Glycyl lysine isopeptide (Lys-Gly) (interchain with G-Cter in ubiquitin) cross-links involve residues Lys-125 and Lys-241. Ser-265 is modified (phosphoserine; by MAPK). Ser-270 contacts FAD. Position 298 is a phosphoserine (Ser-298). Gln-307 contacts FAD. Lys-347 participates in a covalent cross-link: Glycyl lysine isopeptide (Lys-Gly) (interchain with G-Cter in ubiquitin). FAD is bound by residues His-373 and 405–407 (DAD). The tract at residues 389-488 (WVSWESGVRV…IIGVDYPRPI (100 aa)) is required for inhibition of CLOCK-BMAL1-mediated transcription. Glycyl lysine isopeptide (Lys-Gly) (interchain with G-Cter in ubiquitin) cross-links involve residues Lys-474 and Lys-503. The tract at residues 532–594 (VAEPGSSQAG…PAQEPPSKDS (63 aa)) is disordered. Positions 536–547 (GSSQAGSISNTG) are enriched in polar residues. Residue Ser-553 is modified to Phosphoserine; by GSK3-beta. The residue at position 557 (Ser-557) is a Phosphoserine; by DYRK1A and MAPK.

This sequence belongs to the DNA photolyase class-1 family. In terms of assembly, component of the circadian core oscillator, which includes the CRY proteins, CLOCK or NPAS2, BMAL1 or BMAL2, CSNK1D and/or CSNK1E, TIMELESS, and the PER proteins. Interacts with TIMELESS. Interacts directly with PER1, PER2 and PER3; interaction with PER2 inhibits its ubiquitination and vice versa. Interacts with CLOCK-BMAL1. Interacts with CLOCK. Interacts with BMAL1. Interacts with NFIL3. Interacts with FBXL3 and FBXL21. FBXL3, PER2 and the cofactor FAD compete for overlapping binding sites. FBXL3 cannot bind CRY2 that interacts already with PER2 or that contains bound FAD. Interacts with PPP5C (via TPR repeats); the interaction down-regulates the PPP5C phosphatase activity on CSNK1E. Interacts with nuclear receptors AR and NR3C1/GR; the interaction is ligand dependent. Interacts with PRKDC and CIART. Interacts with DDB1, USP7 and TARDBP. Interacts with HNF4A and PPARA. Interacts with PPARD (via domain NR LBD) and NR1I2 (via domain NR LBD) in a ligand-dependent manner. Interacts with PPARG, NR1I3 and VDR in a ligand-dependent manner. It depends on FAD as a cofactor. (6R)-5,10-methylene-5,6,7,8-tetrahydrofolate is required as a cofactor. Post-translationally, phosphorylation on Ser-265 by MAPK is important for the inhibition of CLOCK-BMAL1-mediated transcriptional activity. Phosphorylation by CSKNe requires interaction with PER1 or PER2. Phosphorylated in a circadian manner at Ser-553 and Ser-557 in the suprachiasmatic nucleus (SCN) and liver. Phosphorylation at Ser-557 by DYRK1A promotes subsequent phosphorylation at Ser-553 by GSK3-beta: the two-step phosphorylation at the neighboring Ser residues leads to its proteasomal degradation. In terms of processing, ubiquitinated by the SCF(FBXL3) and SCF(FBXL21) complexes, regulating the balance between degradation and stabilization. The SCF(FBXL3) complex is mainly nuclear and mediates ubiquitination and subsequent degradation of CRY2. In contrast, cytoplasmic SCF(FBXL21) complex-mediated ubiquitination leads to stabilize CRY2 and counteract the activity of the SCF(FBXL3) complex. The SCF(FBXL3) and SCF(FBXL21) complexes probably mediate ubiquitination at different Lys residues. The SCF(FBXL3) complex recognizes and binds CRY2 phosphorylated at Ser-553 and Ser-557. Ubiquitination may be inhibited by PER2. Deubiquitinated by USP7. Expressed in all tissues examined including heart, cerebellum, cerebral cortex, lung, liver, muscle, kidney and ovary. Highest levels in heart, liver and ovary. Highly expressed in the suprachiasmatic nucleus (SCN).

Its subcellular location is the cytoplasm. The protein resides in the nucleus. Its function is as follows. Transcriptional repressor which forms a core component of the circadian clock. The circadian clock, an internal time-keeping system, regulates various physiological processes through the generation of approximately 24 hour circadian rhythms in gene expression, which are translated into rhythms in metabolism and behavior. It is derived from the Latin roots 'circa' (about) and 'diem' (day) and acts as an important regulator of a wide array of physiological functions including metabolism, sleep, body temperature, blood pressure, endocrine, immune, cardiovascular, and renal function. Consists of two major components: the central clock, residing in the suprachiasmatic nucleus (SCN) of the brain, and the peripheral clocks that are present in nearly every tissue and organ system. Both the central and peripheral clocks can be reset by environmental cues, also known as Zeitgebers (German for 'timegivers'). The predominant Zeitgeber for the central clock is light, which is sensed by retina and signals directly to the SCN. The central clock entrains the peripheral clocks through neuronal and hormonal signals, body temperature and feeding-related cues, aligning all clocks with the external light/dark cycle. Circadian rhythms allow an organism to achieve temporal homeostasis with its environment at the molecular level by regulating gene expression to create a peak of protein expression once every 24 hours to control when a particular physiological process is most active with respect to the solar day. Transcription and translation of core clock components (CLOCK, NPAS2, BMAL1, BMAL2, PER1, PER2, PER3, CRY1 and CRY2) plays a critical role in rhythm generation, whereas delays imposed by post-translational modifications (PTMs) are important for determining the period (tau) of the rhythms (tau refers to the period of a rhythm and is the length, in time, of one complete cycle). A diurnal rhythm is synchronized with the day/night cycle, while the ultradian and infradian rhythms have a period shorter and longer than 24 hours, respectively. Disruptions in the circadian rhythms contribute to the pathology of cardiovascular diseases, cancer, metabolic syndromes and aging. A transcription/translation feedback loop (TTFL) forms the core of the molecular circadian clock mechanism. Transcription factors, CLOCK or NPAS2 and BMAL1 or BMAL2, form the positive limb of the feedback loop, act in the form of a heterodimer and activate the transcription of core clock genes and clock-controlled genes (involved in key metabolic processes), harboring E-box elements (5'-CACGTG-3') within their promoters. The core clock genes: PER1/2/3 and CRY1/2 which are transcriptional repressors form the negative limb of the feedback loop and interact with the CLOCK|NPAS2-BMAL1|BMAL2 heterodimer inhibiting its activity and thereby negatively regulating their own expression. This heterodimer also activates nuclear receptors NR1D1/2 and RORA/B/G, which form a second feedback loop and which activate and repress BMAL1 transcription, respectively. CRY1 and CRY2 have redundant functions but also differential and selective contributions at least in defining the pace of the SCN circadian clock and its circadian transcriptional outputs. Less potent transcriptional repressor in cerebellum and liver than CRY1, though less effective in lengthening the period of the SCN oscillator. Seems to play a critical role in tuning SCN circadian period by opposing the action of CRY1. With CRY1, dispensable for circadian rhythm generation but necessary for the development of intercellular networks for rhythm synchrony. May mediate circadian regulation of cAMP signaling and gluconeogenesis by blocking glucagon-mediated increases in intracellular cAMP concentrations and in CREB1 phosphorylation. Besides its role in the maintenance of the circadian clock, is also involved in the regulation of other processes. Plays a key role in glucose and lipid metabolism modulation, in part, through the transcriptional regulation of genes involved in these pathways, such as LEP or ACSL4. Represses glucocorticoid receptor NR3C1/GR-induced transcriptional activity by binding to glucocorticoid response elements (GREs). Represses the CLOCK-BMAL1 induced transcription of BHLHE40/DEC1 and NAMPT. Represses PPARD and its target genes in the skeletal muscle and limits exercise capacity. Represses the transcriptional activity of NR1I2. The protein is Cryptochrome-2 (Cry2) of Rattus norvegicus (Rat).